Consider the following 161-residue polypeptide: Allophycocyanin alpha chain (161 aa).

At Asn-71 the chain carries N4-methylasparagine. Cys-81 is a (2R,3E)-phycocyanobilin binding site.

This sequence belongs to the phycobiliprotein family. As to quaternary structure, heterodimer of an alpha and a beta chain. Post-translationally, contains one covalently linked phycocyanobilin chromophore.

The protein resides in the cellular thylakoid membrane. Functionally, light-harvesting photosynthetic bile pigment-protein from the phycobiliprotein complex. Allophycocyanin has a maximum absorption at approximately 650 nanometers. This Synechocystis sp. (strain ATCC 27184 / PCC 6803 / Kazusa) protein is Allophycocyanin alpha chain (apcA).